A 1070-amino-acid chain; its full sequence is DNA-directed RNA polymerase subunit beta (1070 aa).

Belongs to the RNA polymerase beta chain family. As to quaternary structure, in plastids the minimal PEP RNA polymerase catalytic core is composed of four subunits: alpha, beta, beta', and beta''. When a (nuclear-encoded) sigma factor is associated with the core the holoenzyme is formed, which can initiate transcription.

The protein resides in the plastid. The protein localises to the chloroplast. The catalysed reaction is RNA(n) + a ribonucleoside 5'-triphosphate = RNA(n+1) + diphosphate. Its function is as follows. DNA-dependent RNA polymerase catalyzes the transcription of DNA into RNA using the four ribonucleoside triphosphates as substrates. This is DNA-directed RNA polymerase subunit beta from Buxus microphylla (Littleleaf boxwood).